The sequence spans 282 residues: 2,3,4,5-tetrahydropyridine-2,6-dicarboxylate N-succinyltransferase (282 aa).

2 residues coordinate substrate: R109 and D146.

It belongs to the transferase hexapeptide repeat family. As to quaternary structure, homotrimer.

The protein localises to the cytoplasm. It catalyses the reaction (S)-2,3,4,5-tetrahydrodipicolinate + succinyl-CoA + H2O = (S)-2-succinylamino-6-oxoheptanedioate + CoA. It functions in the pathway amino-acid biosynthesis; L-lysine biosynthesis via DAP pathway; LL-2,6-diaminopimelate from (S)-tetrahydrodipicolinate (succinylase route): step 1/3. This is 2,3,4,5-tetrahydropyridine-2,6-dicarboxylate N-succinyltransferase from Bartonella quintana (strain Toulouse) (Rochalimaea quintana).